A 425-amino-acid polypeptide reads, in one-letter code: MLDLKRIRTDFDTVAAKLKNRGVSEDTLTHLKELDEKRRALLVQSEELKAERNIASAAIAQAKRQKEDATQQIADMQKVSADIKTIDNQLVAIDQQVTDIITVLPNTPHDSVPVGADEEDNVEIRRWGTPRDFDFEVKAHWDLGEDLDILDWERGAKVTGARFLFYKNLGARLERALYNFMLDEHIKEGYQEIITPYMVNHDSMFGTGQYPKFKEDTFELADTNFVLIPTAEVPLTNYYRGEILDGKELPIYFTAMSPSFRSEAGSAGRDTRGLIRLHQFHKVEMVKFAKPEESYQELEKMTANAENILQKLGLPYRVISLCTGDMGFSAAKTYDLEVWIPAQNTYREISSCSNTEDFQARRAQIRYRDEADGKVKLLHTLNGSGLAVGRTVAAILENYQNEDGSVTIPEVLRPYMGGETVISPK.

An L-serine-binding site is contributed by 230–232 (TAE). 261 to 263 (RSE) serves as a coordination point for ATP. Glu-284 lines the L-serine pocket. 348–351 (EISS) is an ATP binding site. Ser-384 serves as a coordination point for L-serine.

It belongs to the class-II aminoacyl-tRNA synthetase family. Type-1 seryl-tRNA synthetase subfamily. As to quaternary structure, homodimer. The tRNA molecule binds across the dimer.

Its subcellular location is the cytoplasm. The catalysed reaction is tRNA(Ser) + L-serine + ATP = L-seryl-tRNA(Ser) + AMP + diphosphate + H(+). The enzyme catalyses tRNA(Sec) + L-serine + ATP = L-seryl-tRNA(Sec) + AMP + diphosphate + H(+). Its pathway is aminoacyl-tRNA biosynthesis; selenocysteinyl-tRNA(Sec) biosynthesis; L-seryl-tRNA(Sec) from L-serine and tRNA(Sec): step 1/1. Its function is as follows. Catalyzes the attachment of serine to tRNA(Ser). Is also able to aminoacylate tRNA(Sec) with serine, to form the misacylated tRNA L-seryl-tRNA(Sec), which will be further converted into selenocysteinyl-tRNA(Sec). The protein is Serine--tRNA ligase of Streptococcus pyogenes serotype M1.